Here is a 228-residue protein sequence, read N- to C-terminus: Ribulose-phosphate 3-epimerase (228 aa).

Residue serine 12 participates in substrate binding. Positions 37, 39, and 70 each coordinate a divalent metal cation. The active-site Proton acceptor is the aspartate 39. Residues histidine 70, 146–149, 176–178, and 198–199 each bind substrate; these read GFGG, DGG, and GS. Position 176 (aspartate 176) interacts with a divalent metal cation. Aspartate 176 (proton donor) is an active-site residue.

Belongs to the ribulose-phosphate 3-epimerase family. A divalent metal cation serves as cofactor.

The catalysed reaction is D-ribulose 5-phosphate = D-xylulose 5-phosphate. It functions in the pathway carbohydrate degradation. In terms of biological role, catalyzes the reversible epimerization of D-ribulose 5-phosphate to D-xylulose 5-phosphate. The chain is Ribulose-phosphate 3-epimerase from Rhodobacter capsulatus (Rhodopseudomonas capsulata).